A 113-amino-acid polypeptide reads, in one-letter code: MSDLEVQVPTAFDPFADANAEDSGAGTKEYVHIRVQQRNGRKSLTTVQGLKKEYSYSKILKDLKKEFCCNGTVVQDSELGQVIQLQGDQRKNVSTFLVQAGLVKKDNIKIHGF.

The residue at position 2 (Ser2) is an N-acetylserine.

This sequence belongs to the SUI1 family.

Functionally, probably involved in translation. This is Protein translation factor SUI1 homolog 2 from Arabidopsis thaliana (Mouse-ear cress).